A 208-amino-acid chain; its full sequence is Dephospho-CoA kinase (208 aa).

Residues 11–207 form the DPCK domain; it reads VIGLTGGIAS…EYYLELAQHD (197 aa). 19–24 provides a ligand contact to ATP; that stretch reads ASGKSA.

This sequence belongs to the CoaE family.

Its subcellular location is the cytoplasm. The catalysed reaction is 3'-dephospho-CoA + ATP = ADP + CoA + H(+). The protein operates within cofactor biosynthesis; coenzyme A biosynthesis; CoA from (R)-pantothenate: step 5/5. In terms of biological role, catalyzes the phosphorylation of the 3'-hydroxyl group of dephosphocoenzyme A to form coenzyme A. The polypeptide is Dephospho-CoA kinase (Hahella chejuensis (strain KCTC 2396)).